A 132-amino-acid chain; its full sequence is Histone H2A.2 (132 aa).

N-acetylserine is present on Ser2. N6-acetyllysine is present on residues Lys5 and Lys8. Lys14 and Lys22 each carry N6-succinyllysine. Gln106 is subject to N5-methylglutamine. Lys120 is modified (N6-malonyllysine). Lys127 participates in a covalent cross-link: Glycyl lysine isopeptide (Lys-Gly) (interchain with G-Cter in SUMO). Ser129 carries the phosphoserine modification. The short motif at 129–130 (SQ) is the [ST]-Q motif element.

The protein belongs to the histone H2A family. In terms of assembly, the nucleosome is a histone octamer containing two molecules each of H2A, H2B, H3 and H4 assembled in one H3-H4 heterotetramer and two H2A-H2B heterodimers. The octamer wraps approximately 147 bp of DNA. Interacts with NAP1. Phosphorylated to form H2AS128ph (gamma-H2A) in response to DNA double-strand breaks (DSBs) generated by exogenous genotoxic agents and by stalled replication forks. Phosphorylation is dependent on the DNA damage checkpoint kinases MEC1/ATR and TEL1/ATM, spreads on either side of a detected DSB site and may mark the surrounding chromatin for recruitment of proteins required for DNA damage signaling and repair. Gamma-H2A interacts with ARP4, a shared component of the NuA4 histone acetyltransferase complex and the INO80 and SWR1 chromatin remodeling complexes, and serves to recruit first NuA4, mediating histone H4 acetylation, and subsequently the INO80/SWR1 complexes, facilitating DNA resection, to DSB sites. Gamma-H2A is required for sequestering cohesin around the break site, which is important for efficient post-replicative double-strand break repair by homologous recombination, holding the damaged chromatid close to its undamaged sister template. Gamma-H2A is removed from the DNA prior to the strand invasion-primer extension step of the repair process and subsequently dephosphorylated by PPH3, a component of the histone H2A phosphatase complex (HTP-C). Dephosphorylation is necessary for efficient recovery from the DNA damage checkpoint. In terms of processing, N-acetylated by NAT4. Post-translationally, acetylated by ESA1, a component of the NuA4 histone acetyltransferase (HAT) complex, to form H2AK4ac and H2AK7ac. Glutamine methylation at Gln-106 (H2AQ105me) by NOP1 is specifically dedicated to polymerase I. It is present at 35S ribosomal DNA locus and impairs binding of the FACT complex. In terms of processing, sumoylated to from H2AK126su. May lead to transcriptional repression.

It localises to the nucleus. Its subcellular location is the chromosome. Core component of nucleosome which plays a central role in DNA double strand break (DSB) repair. Nucleosomes wrap and compact DNA into chromatin, limiting DNA accessibility to the cellular machineries which require DNA as a template. Histones thereby play a central role in transcription regulation, DNA repair, DNA replication and chromosomal stability. DNA accessibility is regulated via a complex set of post-translational modifications of histones, also called histone code, and nucleosome remodeling. The protein is Histone H2A.2 (HTA2) of Saccharomyces cerevisiae (strain ATCC 204508 / S288c) (Baker's yeast).